Reading from the N-terminus, the 206-residue chain is Ras-related protein RABH1a (206 aa).

14-21 (GDQGVGKT) serves as a coordination point for GTP. The short motif at 36 to 44 (YQATIGIDF) is the Effector region element. GTP contacts are provided by residues 62–66 (DTAGQ), 120–123 (NKTD), and 150–151 (SA). S-geranylgeranyl cysteine attachment occurs at residues cysteine 204 and cysteine 206. Cysteine 206 carries the post-translational modification Cysteine methyl ester.

The protein belongs to the small GTPase superfamily. Rab family.

It localises to the golgi apparatus membrane. Protein transport. Regulator of membrane traffic from the Golgi apparatus towards the endoplasmic reticulum (ER). The polypeptide is Ras-related protein RABH1a (RABH1A) (Arabidopsis thaliana (Mouse-ear cress)).